Here is a 301-residue protein sequence, read N- to C-terminus: UDP-N-acetylenolpyruvoylglucosamine reductase (301 aa).

One can recognise an FAD-binding PCMH-type domain in the interval 30-194 (VGGEPDYLVF…LSAKFALAPG (165 aa)). Residue Arg-173 is part of the active site. The active-site Proton donor is the Ser-223. The active site involves Glu-293.

It belongs to the MurB family. The cofactor is FAD.

The protein localises to the cytoplasm. It catalyses the reaction UDP-N-acetyl-alpha-D-muramate + NADP(+) = UDP-N-acetyl-3-O-(1-carboxyvinyl)-alpha-D-glucosamine + NADPH + H(+). It participates in cell wall biogenesis; peptidoglycan biosynthesis. In terms of biological role, cell wall formation. The protein is UDP-N-acetylenolpyruvoylglucosamine reductase of Streptococcus pneumoniae (strain CGSP14).